We begin with the raw amino-acid sequence, 301 residues long: DSC E3 ubiquitin ligase complex subunit B (301 aa).

3 helical membrane passes run 9-29 (APIT…LSIL), 52-72 (LATW…AAML), and 90-110 (TFII…LVLL). The span at 268–284 (AAAAASGNAGSASEASG) shows a compositional bias: low complexity. The interval 268 to 301 (AAAAASGNAGSASEASGQRQRRREGGIMDRLRAL) is disordered. Over residues 290–301 (REGGIMDRLRAL) the composition is skewed to basic and acidic residues.

As to quaternary structure, component of the DSC E3 ubiquitin ligase complex composed of dscA, dscB, dscC and dscD.

Its subcellular location is the endoplasmic reticulum membrane. The catalysed reaction is S-ubiquitinyl-[E2 ubiquitin-conjugating enzyme]-L-cysteine + [acceptor protein]-L-lysine = [E2 ubiquitin-conjugating enzyme]-L-cysteine + N(6)-ubiquitinyl-[acceptor protein]-L-lysine.. It functions in the pathway protein modification; protein ubiquitination. In terms of biological role, component of the DSC E3 ubiquitin ligase complex which is required for the srbA transcriptional activator proteolytic cleavage to release the soluble transcription factor from the membrane in low oxygen or sterol conditions. Required for growth during hypoxia and triazole drug susceptibility, as well as for virulence in a murine model of invasive pulmonary aspergillosis (IPA). This chain is DSC E3 ubiquitin ligase complex subunit B, found in Aspergillus fumigatus (strain ATCC MYA-4609 / CBS 101355 / FGSC A1100 / Af293) (Neosartorya fumigata).